We begin with the raw amino-acid sequence, 190 residues long: MTILVINNKGQYNHRIQRSLQYLKIPTELVPNTLSIEEIEAKNPIGLILGGGPSIEGAGNSEEYIKHFDIPILGICLGHQLIAKAYGGQIDTSNTESYAKVEINIVNDENLFSGLAPKMEVWSSHKDEVKSIPDDFEILANSNLCDVESFKHTEKDVYGIQFHPEVHHTPKGSTIFENFYEICKKRCNND.

Positions 2–189 (TILVINNKGQ…YEICKKRCNN (188 aa)) constitute a Glutamine amidotransferase type-1 domain. The Nucleophile role is filled by Cys-76. Active-site residues include His-163 and Glu-165.

Heterodimer composed of a glutamine amidotransferase subunit (A) and a GMP-binding subunit (B).

The enzyme catalyses XMP + L-glutamine + ATP + H2O = GMP + L-glutamate + AMP + diphosphate + 2 H(+). It participates in purine metabolism; GMP biosynthesis; GMP from XMP (L-Gln route): step 1/1. Functionally, catalyzes the synthesis of GMP from XMP. This is GMP synthase [glutamine-hydrolyzing] subunit A from Methanobrevibacter smithii (strain ATCC 35061 / DSM 861 / OCM 144 / PS).